Consider the following 700-residue polypeptide: Autophagy-related protein 13 (700 aa).

The disordered stretch occupies residues 319 to 352; that stretch reads GSINSSSSPPPGATQSNQSVSSFSTSKPIPVTLN. Positions 332 to 344 are enriched in low complexity; the sequence is TQSNQSVSSFSTS. The interval 399–407 is ATG17-binding; the sequence is SSFGSRFRT. The interval 428–487 is ATG1-binding; that stretch reads TPNNPILHNFRSRNKSPSVSSTELGPSSSIYMDDDLDSFMKMLDSKPDLRFPSNSPSVYE. The segment covering 506 to 532 has biased composition (polar residues); it reads EQQQHGSPSSNQIMIHSQSQTSQSQVF. 3 disordered regions span residues 506–562, 576–637, and 649–700; these read EQQQ…PGVS, HASS…NPEL, and ESDD…NQEF. Positions 595 to 631 are enriched in low complexity; it reads SSPPASATAVATVHNSLRRLTSSSQRTNTNSTNSSTR. Residues 656–667 show a composition bias toward basic and acidic residues; sequence DEHSPRSTDTKS.

Belongs to the ATG13 family. Fungi subfamily. Hypophosphorylated form interacts with ATG1 to form the ATG1-ATG13 kinase complex. The ATG1-ATG13 complex interacts with the ATG17-ATG29-ATG31 complex through direct interaction with ATG17. Interacts with VAC8.

The protein localises to the cytoplasm. The protein resides in the preautophagosomal structure. Its function is as follows. Activates the ATG1 kinase in a nutritional condition dependent manner through the TOR pathway, leading to autophagy. Involved in ATG9 and ATG23 cycling through the pre-autophagosomal structure. Also involved in cytoplasm to vacuole transport (Cvt) and more specifically in Cvt vesicle formation. Seems to play a role in the switching machinery regulating the conversion between the Cvt pathway and autophagy. Finally, ATG13 is also required for glycogen storage during stationary phase. Functionally, acts as a negative regulator of xylose alcoholic fermentation, a role that is not related to autophagy. This is Autophagy-related protein 13 from Ogataea parapolymorpha (strain ATCC 26012 / BCRC 20466 / JCM 22074 / NRRL Y-7560 / DL-1) (Yeast).